We begin with the raw amino-acid sequence, 555 residues long: Glutamine--tRNA ligase (555 aa).

A 'HIGH' region motif is present at residues 34–44; the sequence is PEPNGYLHIGH. ATP is bound by residues 35 to 37 and 41 to 47; these read EPN and HIGHAKS. L-glutamine is bound by residues D67 and Y212. ATP is bound by residues T231, 261–262, and 269–271; these read RL and MSK. The 'KMSKS' region motif lies at 268–272; that stretch reads VMSKR.

This sequence belongs to the class-I aminoacyl-tRNA synthetase family. Monomer.

The protein localises to the cytoplasm. It catalyses the reaction tRNA(Gln) + L-glutamine + ATP = L-glutaminyl-tRNA(Gln) + AMP + diphosphate. The sequence is that of Glutamine--tRNA ligase from Cronobacter sakazakii (strain ATCC BAA-894) (Enterobacter sakazakii).